We begin with the raw amino-acid sequence, 360 residues long: Peptide chain release factor 1 (360 aa).

Glutamine 235 is subject to N5-methylglutamine. The segment at 285–313 (KRQQAEASTRRNLLGSGDRSDRNRTYNFP) is disordered.

Belongs to the prokaryotic/mitochondrial release factor family. Methylated by PrmC. Methylation increases the termination efficiency of RF1.

It localises to the cytoplasm. Peptide chain release factor 1 directs the termination of translation in response to the peptide chain termination codons UAG and UAA. This Enterobacter sp. (strain 638) protein is Peptide chain release factor 1.